Consider the following 441-residue polypeptide: Probable magnesium transporter NIPA8 (441 aa).

The Extracellular segment spans residues 1-4; that stretch reads MGEW. A helical membrane pass occupies residues 5-25; sequence VIGAFINIFGSVAINFGTNLL. At 26–56 the chain is on the cytoplasmic side; that stretch reads KLGHNERERLALQDGGGKMPLKPIIHNQTWR. Residues 57–77 traverse the membrane as a helical segment; sequence VGILVFLLGNCLNFISFGYAA. Topologically, residues 78-79 are extracellular; the sequence is QS. A helical transmembrane segment spans residues 80–100; the sequence is LLAALGSIQFVSNIAFAYVVL. At 101–105 the chain is on the cytoplasmic side; it reads NKMVT. The chain crosses the membrane as a helical span at residues 106 to 126; it reads VKVLVATAFIVLGNVFLVAFG. Residues 127-144 lie on the Extracellular side of the membrane; that stretch reads NHQSPVFTPEQLAEKYSN. Residues 145 to 165 traverse the membrane as a helical segment; sequence VTFLVYCGILILIVAVHHFLY. Topologically, residues 166–184 are cytoplasmic; that stretch reads RKGEVLISTPGQEISSYWK. A helical membrane pass occupies residues 185-205; sequence MLLPFSYAVVSGAIGSCSVLF. Residues 206 to 222 are Extracellular-facing; sequence AKSLSNLLRLAMSSSYQ. The chain crosses the membrane as a helical span at residues 223-243; that stretch reads LHSWFTYSMLLLFLSTAGFWM. Residues 244-255 lie on the Cytoplasmic side of the membrane; it reads TRLNEGLSLYDA. A helical transmembrane segment spans residues 256–276; that stretch reads ILIVPMFQIAWTFFSICTGCI. Topologically, residues 277–288 are extracellular; it reads YFQEFQVFDALR. Residues 289-309 form a helical membrane-spanning segment; sequence TTMFILGMMCVFIGISLLAPD. Residues 310 to 441 lie on the Cytoplasmic side of the membrane; sequence DTRGNETKDN…MLEKTISSKA (132 aa). Residues 313–347 are disordered; sequence GNETKDNSSSLDSIVSSSVPTEEDRLIPQSSEDGH. A compositionally biased stretch (low complexity) spans 320–330; that stretch reads SSSLDSIVSSS. A compositionally biased stretch (basic and acidic residues) spans 334-347; sequence EEDRLIPQSSEDGH.

The protein belongs to the NIPA (TC 2.A.7) family. Homodimer.

It is found in the cell membrane. Its subcellular location is the early endosome. Functionally, acts as a Mg(2+) transporter. Can also transport other divalent cations such as Fe(2+), Sr(2+), Ba(2+), Mn(2+) and Co(2+) but to a much less extent than Mg(2+). This Arabidopsis thaliana (Mouse-ear cress) protein is Probable magnesium transporter NIPA8.